The following is a 331-amino-acid chain: 4-hydroxy-3-methylbut-2-enyl diphosphate reductase (331 aa).

[4Fe-4S] cluster is bound at residue cysteine 12. (2E)-4-hydroxy-3-methylbut-2-enyl diphosphate contacts are provided by histidine 43 and histidine 81. Histidine 43 and histidine 81 together coordinate dimethylallyl diphosphate. The isopentenyl diphosphate site is built by histidine 43 and histidine 81. Cysteine 103 serves as a coordination point for [4Fe-4S] cluster. Histidine 131 is a (2E)-4-hydroxy-3-methylbut-2-enyl diphosphate binding site. Histidine 131 lines the dimethylallyl diphosphate pocket. An isopentenyl diphosphate-binding site is contributed by histidine 131. The active-site Proton donor is glutamate 133. Threonine 170 is a binding site for (2E)-4-hydroxy-3-methylbut-2-enyl diphosphate. A [4Fe-4S] cluster-binding site is contributed by cysteine 198. (2E)-4-hydroxy-3-methylbut-2-enyl diphosphate contacts are provided by serine 226, asparagine 228, and serine 271. Dimethylallyl diphosphate-binding residues include serine 226, asparagine 228, and serine 271. 3 residues coordinate isopentenyl diphosphate: serine 226, asparagine 228, and serine 271.

It belongs to the IspH family. [4Fe-4S] cluster is required as a cofactor.

It carries out the reaction isopentenyl diphosphate + 2 oxidized [2Fe-2S]-[ferredoxin] + H2O = (2E)-4-hydroxy-3-methylbut-2-enyl diphosphate + 2 reduced [2Fe-2S]-[ferredoxin] + 2 H(+). The catalysed reaction is dimethylallyl diphosphate + 2 oxidized [2Fe-2S]-[ferredoxin] + H2O = (2E)-4-hydroxy-3-methylbut-2-enyl diphosphate + 2 reduced [2Fe-2S]-[ferredoxin] + 2 H(+). It functions in the pathway isoprenoid biosynthesis; dimethylallyl diphosphate biosynthesis; dimethylallyl diphosphate from (2E)-4-hydroxy-3-methylbutenyl diphosphate: step 1/1. The protein operates within isoprenoid biosynthesis; isopentenyl diphosphate biosynthesis via DXP pathway; isopentenyl diphosphate from 1-deoxy-D-xylulose 5-phosphate: step 6/6. Catalyzes the conversion of 1-hydroxy-2-methyl-2-(E)-butenyl 4-diphosphate (HMBPP) into a mixture of isopentenyl diphosphate (IPP) and dimethylallyl diphosphate (DMAPP). Acts in the terminal step of the DOXP/MEP pathway for isoprenoid precursor biosynthesis. This Listeria monocytogenes serovar 1/2a (strain ATCC BAA-679 / EGD-e) protein is 4-hydroxy-3-methylbut-2-enyl diphosphate reductase.